A 441-amino-acid chain; its full sequence is Rho-associated protein kinase 1 (441 aa).

Positions 1–99 form a coiled coil; the sequence is NSKSQMDKDY…RLEQEVNEHK (99 aa). The SHROOM3 binding stretch occupies residues 114-353; sequence EAKSVAMCEM…TLSRLEETNS (240 aa). The 67-residue stretch at 356–422 folds into the RhoBD domain; it reads TKDIELLRKE…LAEIMNRKDF (67 aa). A coiled-coil region spans residues 418 to 441; that stretch reads NRKDFKIDRKKANTQDLRKKKKKK.

It belongs to the protein kinase superfamily. AGC Ser/Thr protein kinase family. Homodimer. Interacts with RHOA (activated by GTP), RHOB, RHOC, GEM, MYLC2B, RHOE, PPP1R12A, LIMK1, LIMK2, TSG101, CHORDC1, DAPK3, PFN1, PTEN and JIP3. Interacts with FHOD1 in a Src-dependent manner. Interacts with ITGB1BP1 (via N-terminus and PTB domain). Interacts with SHROOM3. The cofactor is Mg(2+).

The protein localises to the cytoplasm. The protein resides in the golgi apparatus membrane. It localises to the cytoskeleton. Its subcellular location is the microtubule organizing center. It is found in the centrosome. The protein localises to the centriole. The protein resides in the cell projection. It localises to the bleb. Its subcellular location is the cell membrane. It is found in the lamellipodium. The protein localises to the ruffle. It catalyses the reaction L-seryl-[protein] + ATP = O-phospho-L-seryl-[protein] + ADP + H(+). The catalysed reaction is L-threonyl-[protein] + ATP = O-phospho-L-threonyl-[protein] + ADP + H(+). Its activity is regulated as follows. Activated by RHOA binding. Inhibited by Y-27632. In terms of biological role, protein kinase which is a key regulator of the actin cytoskeleton and cell polarity. Involved in regulation of smooth muscle contraction, actin cytoskeleton organization, stress fiber and focal adhesion formation, neurite retraction, cell adhesion and motility via phosphorylation of DAPK3, GFAP, LIMK1, LIMK2, MYL9/MLC2, TPPP, PFN1 and PPP1R12A. Phosphorylates FHOD1 and acts synergistically with it to promote SRC-dependent non-apoptotic plasma membrane blebbing. Phosphorylates JIP3 and regulates the recruitment of JNK to JIP3 upon UVB-induced stress. Acts as a suppressor of inflammatory cell migration by regulating PTEN phosphorylation and stability. Acts as a negative regulator of VEGF-induced angiogenic endothelial cell activation. Required for centrosome positioning and centrosome-dependent exit from mitosis. Plays a role in terminal erythroid differentiation. Inhibits podocyte motility via regulation of actin cytoskeletal dynamics and phosphorylation of CFL1. Promotes keratinocyte terminal differentiation. Involved in osteoblast compaction through the fibronectin fibrillogenesis cell-mediated matrix assembly process, essential for osteoblast mineralization. May regulate closure of the eyelids and ventral body wall by inducing the assembly of actomyosin bundles. The protein is Rho-associated protein kinase 1 (ROCK1) of Bos taurus (Bovine).